The following is a 981-amino-acid chain: MDSAIDISSDSDVEIQETRTRPQHPPRIAEGSHRRDLSTLRPHFLSGSSSGANGHTKTGLTNLDSRNGFESKPLPRAEHHTHIPGNGSIVTSRIPNISVGDYEKFSSQQAFKRTHPPTFSRPPFPPRPDIGTSNGNASHFRGGAHDDLGMGRVTNGTRILPPSVAHGTSASPSHFNGLSDPMHRNGIGEERNSENDERLIYQAALQELNQPKSEVDLPAGLLSVPLMKHQKIALAWMFQKETNSLHCMGGILADDQGLGKTVSTIALILKQMHEAKLKSKNSGNQEAEALDLDADDESENAFEKPESKASNGSGVNGDSGIKKAKGEEASTSTRKFNRKRPAAGTLIVCPASVVRQWARELDEKVTDEAKLSVLIYHGGNRTKDPIELAKYDVVMTTYAIVSNEVPKQPLVDDDENDEKNSEKYGLASGFSINKKRKNVVGTTKKSKKKKGNNNAGDSSDPDSGTLAKVGWFRVVLDEAQTIKNHRTQVARACCGLRAKRRWCLSGTPIQNTIDDLYSYFRFLKYDPYAVYKSFCHQIKGPISRNSLQGYKKLQAVLRAIMLRRTKGTLLDGQPIINLPPKTINLSQVDFSVEERSFYVKLESDSRSQFKAYAAAGTLNQNYANILLMLLRLRQACDHPQLVKRYNSDSVGKVSEEAVKKLPKEDLVSLLSRLESSPICCVCHDPPEDPVVTLCGHIFCYQCVSDYITGDEDTCPAPRCREQLAHDVVFSKSTLRSCVADDLGCSSSEDNSHDKSVFQNGEFSSSKIKAVLDILQSLSNQGTSNSTQNGQMASSSQQPNDDDDDDDDDVTIVEKTSLKSTPSNGGPIKTIIFSQWTGMLDLVELSLIENSIEFRRLDGTMSLIARDRAVKEFSNDPDVKVMIMSLKAGNLGLNMIAACHVILLDLWWNPTTEDQAIDRAHRIGQTRPVTVTRITIKNTVEDRILALQEEKRKMVASAFGEDHGGSSATRLTVDDLKYLFMV.

Disordered stretches follow at residues 1 to 66 and 112 to 194; these read MDSA…LDSR and KRTH…RNSE. The segment covering 46 to 65 has biased composition (polar residues); it reads SGSSSGANGHTKTGLTNLDS. Residues 119–128 show a composition bias toward pro residues; it reads FSRPPFPPRP. Polar residues predominate over residues 166–176; the sequence is HGTSASPSHFN. A compositionally biased stretch (basic and acidic residues) spans 181–194; sequence PMHRNGIGEERNSE. Positions 241–526 constitute a Helicase ATP-binding domain; the sequence is ETNSLHCMGG…YSYFRFLKYD (286 aa). 254–261 provides a ligand contact to ATP; it reads DDQGLGKT. 2 disordered regions span residues 293–337 and 439–462; these read DADD…RKFN and VVGTTKKSKKKKGNNNAGDSSDPD. Over residues 439-451 the composition is skewed to basic residues; it reads VVGTTKKSKKKKG. The segment at 679–718 adopts an RING-type; degenerate zinc-finger fold; sequence CCVCHDPPEDPVVTLCGHIFCYQCVSDYITGDEDTCPAPR. Positions 779 to 798 are enriched in polar residues; sequence NQGTSNSTQNGQMASSSQQP. Residues 779–808 are disordered; the sequence is NQGTSNSTQNGQMASSSQQPNDDDDDDDDD. The span at 799-808 shows a compositional bias: acidic residues; that stretch reads NDDDDDDDDD. In terms of domain architecture, Helicase C-terminal spans 804 to 976; the sequence is DDDDDVTIVE…ATRLTVDDLK (173 aa).

Belongs to the SNF2/RAD54 helicase family. RAD16 subfamily. Interacts with SUVR2.

It localises to the nucleus. Its function is as follows. Probable helicase-like transcription factor involved in transcriptional gene silencing. Associates with SUVR2 and contributes to transcriptional gene silencing at RNA-directed DNA methylation (RdDM) target loci but also at RdDM-independent target loci. May be involved in nucleosome positioning to form ordered nucleosome arrays on chromatin. Associates with SUVR2 and functions redundantly with FRG1. Required for the efficient methylation of a broad range of RdDM target loci. The sequence is that of Helicase-like transcription factor CHR28 from Arabidopsis thaliana (Mouse-ear cress).